The primary structure comprises 116 residues: Large ribosomal subunit protein bL17 (116 aa).

Belongs to the bacterial ribosomal protein bL17 family. In terms of assembly, part of the 50S ribosomal subunit. Contacts protein L32.

In Prochlorococcus marinus (strain MIT 9312), this protein is Large ribosomal subunit protein bL17.